A 345-amino-acid polypeptide reads, in one-letter code: Phosphate acyltransferase (345 aa).

The protein belongs to the PlsX family. As to quaternary structure, homodimer. Probably interacts with PlsY.

The protein localises to the cytoplasm. It catalyses the reaction a fatty acyl-[ACP] + phosphate = an acyl phosphate + holo-[ACP]. It participates in lipid metabolism; phospholipid metabolism. Functionally, catalyzes the reversible formation of acyl-phosphate (acyl-PO(4)) from acyl-[acyl-carrier-protein] (acyl-ACP). This enzyme utilizes acyl-ACP as fatty acyl donor, but not acyl-CoA. The chain is Phosphate acyltransferase from Levilactobacillus brevis (strain ATCC 367 / BCRC 12310 / CIP 105137 / JCM 1170 / LMG 11437 / NCIMB 947 / NCTC 947) (Lactobacillus brevis).